The sequence spans 124 residues: Small ribosomal subunit protein uS12 (124 aa).

Asp89 carries the 3-methylthioaspartic acid modification. The interval 104 to 124 (ALGVEDRKRGRSKYGAKRPKA) is disordered. The segment covering 112–124 (RGRSKYGAKRPKA) has biased composition (basic residues).

Belongs to the universal ribosomal protein uS12 family. In terms of assembly, part of the 30S ribosomal subunit. Contacts proteins S8 and S17. May interact with IF1 in the 30S initiation complex.

In terms of biological role, with S4 and S5 plays an important role in translational accuracy. Interacts with and stabilizes bases of the 16S rRNA that are involved in tRNA selection in the A site and with the mRNA backbone. Located at the interface of the 30S and 50S subunits, it traverses the body of the 30S subunit contacting proteins on the other side and probably holding the rRNA structure together. The combined cluster of proteins S8, S12 and S17 appears to hold together the shoulder and platform of the 30S subunit. The protein is Small ribosomal subunit protein uS12 of Treponema denticola (strain ATCC 35405 / DSM 14222 / CIP 103919 / JCM 8153 / KCTC 15104).